The sequence spans 291 residues: Formamidopyrimidine-DNA glycosylase (291 aa).

Residue P2 is the Schiff-base intermediate with DNA of the active site. The Proton donor role is filled by E3. K58 serves as the catalytic Proton donor; for beta-elimination activity. DNA is bound by residues H100, R123, and K166. An FPG-type zinc finger spans residues 257–291; it reads SVYGREGKECFQCGIPITRISQSGRSSFYCSQCQK. The active-site Proton donor; for delta-elimination activity is the R281.

Belongs to the FPG family. In terms of assembly, monomer. Zn(2+) is required as a cofactor.

It carries out the reaction Hydrolysis of DNA containing ring-opened 7-methylguanine residues, releasing 2,6-diamino-4-hydroxy-5-(N-methyl)formamidopyrimidine.. The catalysed reaction is 2'-deoxyribonucleotide-(2'-deoxyribose 5'-phosphate)-2'-deoxyribonucleotide-DNA = a 3'-end 2'-deoxyribonucleotide-(2,3-dehydro-2,3-deoxyribose 5'-phosphate)-DNA + a 5'-end 5'-phospho-2'-deoxyribonucleoside-DNA + H(+). In terms of biological role, involved in base excision repair of DNA damaged by oxidation or by mutagenic agents. Acts as a DNA glycosylase that recognizes and removes damaged bases. Has a preference for oxidized purines, such as 7,8-dihydro-8-oxoguanine (8-oxoG). Has AP (apurinic/apyrimidinic) lyase activity and introduces nicks in the DNA strand. Cleaves the DNA backbone by beta-delta elimination to generate a single-strand break at the site of the removed base with both 3'- and 5'-phosphates. In Bartonella quintana (strain Toulouse) (Rochalimaea quintana), this protein is Formamidopyrimidine-DNA glycosylase.